Consider the following 349-residue polypeptide: Cobalt-precorrin-5B C(1)-methyltransferase (349 aa).

It belongs to the CbiD family.

The catalysed reaction is Co-precorrin-5B + S-adenosyl-L-methionine = Co-precorrin-6A + S-adenosyl-L-homocysteine. It functions in the pathway cofactor biosynthesis; adenosylcobalamin biosynthesis; cob(II)yrinate a,c-diamide from sirohydrochlorin (anaerobic route): step 6/10. Its function is as follows. Catalyzes the methylation of C-1 in cobalt-precorrin-5B to form cobalt-precorrin-6A. In Saccharolobus islandicus (strain M.16.27) (Sulfolobus islandicus), this protein is Cobalt-precorrin-5B C(1)-methyltransferase.